Reading from the N-terminus, the 283-residue chain is MATNLQDGNTPCLAATPSDPRPTVLVFDSGVGGLSVYNEIRQLLPNLHYIYAFDNVAFPYGEKSEEFIVERVVEIVTAVQQRYPLALAVIACNTASTVSLPALREKFAFPVVGVVPAIKPAARLTANGIVGLLATRGTVKRPYTRELIDRFANECRIEMLGSAELVELAEAKLHGEPVPLEELRRILRPWLRMQEPPDTVVLGCTHFPLLQEELQRVLPEGTRLIDSGAAIARRTAWLLEHEAPDAKSSDENKAFCMALTAETEQLLPVLHRYGFPTLEKLPL.

Substrate is bound by residues 28–29 and 60–61; these read DS and YG. Cys92 serves as the catalytic Proton donor/acceptor. Residue 93-94 participates in substrate binding; that stretch reads NT. Cys204 serves as the catalytic Proton donor/acceptor. 205–206 contacts substrate; the sequence is TH.

It belongs to the aspartate/glutamate racemases family.

The catalysed reaction is L-glutamate = D-glutamate. Its pathway is cell wall biogenesis; peptidoglycan biosynthesis. Its function is as follows. Provides the (R)-glutamate required for cell wall biosynthesis. This is Glutamate racemase from Klebsiella pneumoniae (strain 342).